The following is a 250-amino-acid chain: Small ribosomal subunit protein uS3 (250 aa).

Residues 39-111 enclose the KH type-2 domain; sequence IRTLIKNHYP…KVQINIFEVK (73 aa).

It belongs to the universal ribosomal protein uS3 family. As to quaternary structure, part of the 30S ribosomal subunit. Forms a tight complex with proteins S10 and S14.

Binds the lower part of the 30S subunit head. Binds mRNA in the 70S ribosome, positioning it for translation. The chain is Small ribosomal subunit protein uS3 from Rubus stunt phytoplasma.